The following is a 166-amino-acid chain: MTQQVKQALAAYDVVREKFGDAVSAFDSNETMPFFEVLDTDQWPDIALFMRDHPKLKFNYMACLSGVDYPQEEKLGIVCNLESVAALGHRVAVKVRCSRDGGSIPSVACVWHTANWHEREAYDMFGMLFSGHPDLRRILCPEDWEGFPLRKDYKVQETYHGIKVPY.

Belongs to the complex I 30 kDa subunit family. As to quaternary structure, NDH-1 is composed of 14 different subunits. Subunits NuoB, C, D, E, F, and G constitute the peripheral sector of the complex.

The protein resides in the cell inner membrane. The catalysed reaction is a quinone + NADH + 5 H(+)(in) = a quinol + NAD(+) + 4 H(+)(out). Its function is as follows. NDH-1 shuttles electrons from NADH, via FMN and iron-sulfur (Fe-S) centers, to quinones in the respiratory chain. The immediate electron acceptor for the enzyme in this species is believed to be a menaquinone. Couples the redox reaction to proton translocation (for every two electrons transferred, four hydrogen ions are translocated across the cytoplasmic membrane), and thus conserves the redox energy in a proton gradient. This Chlorobium phaeobacteroides (strain DSM 266 / SMG 266 / 2430) protein is NADH-quinone oxidoreductase subunit C.